A 162-amino-acid polypeptide reads, in one-letter code: NADH-quinone oxidoreductase subunit I (162 aa).

2 4Fe-4S ferredoxin-type domains span residues 54-83 and 93-122; these read RRYE…IESE and TRYD…ETQI. [4Fe-4S] cluster-binding residues include C63, C66, C69, C73, C102, C105, C108, and C112.

It belongs to the complex I 23 kDa subunit family. In terms of assembly, NDH-1 is composed of 14 different subunits. Subunits NuoA, H, J, K, L, M, N constitute the membrane sector of the complex. [4Fe-4S] cluster serves as cofactor.

The protein localises to the cell inner membrane. It carries out the reaction a quinone + NADH + 5 H(+)(in) = a quinol + NAD(+) + 4 H(+)(out). Its function is as follows. NDH-1 shuttles electrons from NADH, via FMN and iron-sulfur (Fe-S) centers, to quinones in the respiratory chain. The immediate electron acceptor for the enzyme in this species is believed to be ubiquinone. Couples the redox reaction to proton translocation (for every two electrons transferred, four hydrogen ions are translocated across the cytoplasmic membrane), and thus conserves the redox energy in a proton gradient. This chain is NADH-quinone oxidoreductase subunit I, found in Burkholderia vietnamiensis (strain G4 / LMG 22486) (Burkholderia cepacia (strain R1808)).